The chain runs to 107 residues: Putative antitoxin VapB5 (107 aa).

The next 2 helical transmembrane spans lie at 3–23 and 65–85; these read GPVI…ILLA and LIIL…AYLY.

Its subcellular location is the cell membrane. Functionally, possibly the antitoxin component of a type II toxin-antitoxin (TA) system. Its cognate toxin is VapC5 (Potential). In Methanocaldococcus jannaschii (strain ATCC 43067 / DSM 2661 / JAL-1 / JCM 10045 / NBRC 100440) (Methanococcus jannaschii), this protein is Putative antitoxin VapB5 (vapB5).